Here is a 94-residue protein sequence, read N- to C-terminus: uncharacterized protein (94 aa).

This is an uncharacterized protein from Treponema pallidum (strain Nichols).